Reading from the N-terminus, the 465-residue chain is Eukaryotic translation initiation factor 3 subunit M (465 aa).

The PCI domain maps to 215 to 383; the sequence is EEMSYNHVIL…GEFLVHRATY (169 aa). The tract at residues 429–465 is disordered; the sequence is AAAESGREGGARGGAGERRRGGGGHQGPREVDLVGGD. Basic and acidic residues-rich tracts occupy residues 433-448 and 455-465; these read SGREGGARGGAGERRR and GPREVDLVGGD.

The protein belongs to the eIF-3 subunit M family. As to quaternary structure, component of the eukaryotic translation initiation factor 3 (eIF-3) complex.

The protein localises to the cytoplasm. Component of the eukaryotic translation initiation factor 3 (eIF-3) complex, which is involved in protein synthesis of a specialized repertoire of mRNAs and, together with other initiation factors, stimulates binding of mRNA and methionyl-tRNAi to the 40S ribosome. The eIF-3 complex specifically targets and initiates translation of a subset of mRNAs involved in cell proliferation. The chain is Eukaryotic translation initiation factor 3 subunit M from Coccidioides immitis (strain RS) (Valley fever fungus).